A 506-amino-acid polypeptide reads, in one-letter code: Sodium transporter HKT1 (506 aa).

Residues 1–19 are Cytoplasmic-facing; that stretch reads MDRVVAKIAKIRSQLTKLR. The helical transmembrane segment at 20 to 40 threads the bilayer; that stretch reads SLFFLYFIYFLFFSFLGFLAL. The Extracellular segment spans residues 41–81; that stretch reads KITKPRTTSRPHDFDLFFTSVSAITVSSMSTVDMEVFSNTQ. The helical transmembrane segment at 82 to 102 threads the bilayer; the sequence is LIFLTILMFLGGEIFTSFLNL. Residues 103 to 159 lie on the Cytoplasmic side of the membrane; sequence YVSYFTKFVFPHNKIRHILGSYNSDSSIEDRCDVETVTDYREGLIKIDERASKCLYS. The chain crosses the membrane as a helical span at residues 160–180; sequence VVLSYHLVTNLVGSVLLLVYV. The Extracellular portion of the chain corresponds to 181-232; the sequence is NFVKTARDVLSSKEISPLTFSVFTTVSTFANCGFVPTNENMIIFRKNSGLIW. The helical transmembrane segment at 233–253 threads the bilayer; that stretch reads LLIPQVLMGNTLFPCFLVLLI. Residues 254–286 lie on the Cytoplasmic side of the membrane; it reads WGLYKITKRDEYGYILKNHNKMGYSHLLSVRLC. The chain crosses the membrane as a helical span at residues 287–307; that stretch reads VLLGVTVLGFLIIQLLFFCAF. Residues 308 to 348 lie on the Extracellular side of the membrane; that stretch reads EWTSESLEGMSSYEKLVGSLFQVVNSRHTGETIVDLSTLSP. A helical transmembrane segment spans residues 349 to 369; it reads AILVLFILMMYLPPYTLFMPL. The Cytoplasmic portion of the chain corresponds to 370–392; it reads TEQKTIEKEGGDDDSENGKKVKK. Residues 393-413 traverse the membrane as a helical segment; that stretch reads SGLIVSQLSFLTICIFLISIT. Over 414-465 the chain is Extracellular; sequence ERQNLQRDPINFNVLNITLEVISAYGNVGFTTGYSCERRVDISDGGCKDASY. An N-linked (GlcNAc...) asparagine glycan is attached at Asn429. The helical transmembrane segment at 466–486 threads the bilayer; it reads GFAGRWSPMGKFVLIIVMFYG. Topologically, residues 487-506 are cytoplasmic; sequence RFKQFTAKSGRAWILYPSSS.

The protein belongs to the TrkH potassium transport family. HKT (TC 2.A.38.3) subfamily. Post-translationally, N-glycosylated. Not essential for functional expression and membrane targeting. Highly expressed in roots. Expressed in flowers, leaves and stems. Expressed in the vascular tissues of every organs. In roots, leaves and flower peduncles, it is only expressed in the phloem tissues. Not expressed in root peripheral cells.

It is found in the cell membrane. It carries out the reaction Na(+)(in) = Na(+)(out). Sodium transporter protein, which plays a central role in plant tolerance to salt. Upon prolongated exposure to high concentrations, Na(+) translocates from the roots to the transpiring leaves where it can increase to toxic level. Involved in Na(+) recirculation from shoots to roots, probably by mediating Na(+) loading into the phloem sap in shoots and unloading in roots, thereby removing large amounts of Na(+) from the shoot. Does not transport K(+) but regulates K(+) nutrient status via its ability to facilitate Na(+) homeostasis. Probably not involved in root uptake of Na(+). The polypeptide is Sodium transporter HKT1 (HKT1) (Arabidopsis thaliana (Mouse-ear cress)).